The primary structure comprises 251 residues: Coproheme decarboxylase (251 aa).

Residues Arg-133, 147–151, His-174, Gln-187, and Ser-225 each bind Fe-coproporphyrin III; that span reads YPMSK. Tyr-147 is an active-site residue.

The protein belongs to the ChdC family. Type 1 subfamily. It depends on Fe-coproporphyrin III as a cofactor.

It catalyses the reaction Fe-coproporphyrin III + 2 H2O2 + 2 H(+) = heme b + 2 CO2 + 4 H2O. It carries out the reaction Fe-coproporphyrin III + H2O2 + H(+) = harderoheme III + CO2 + 2 H2O. The catalysed reaction is harderoheme III + H2O2 + H(+) = heme b + CO2 + 2 H2O. It functions in the pathway porphyrin-containing compound metabolism; protoheme biosynthesis. Functionally, involved in coproporphyrin-dependent heme b biosynthesis. Catalyzes the decarboxylation of Fe-coproporphyrin III (coproheme) to heme b (protoheme IX), the last step of the pathway. The reaction occurs in a stepwise manner with a three-propionate intermediate. In Listeria monocytogenes serotype 4a (strain HCC23), this protein is Coproheme decarboxylase.